The sequence spans 190 residues: Hypoxanthine/guanine phosphoribosyltransferase (190 aa).

This sequence belongs to the purine/pyrimidine phosphoribosyltransferase family. Archaeal HPRT subfamily. In terms of assembly, homodimer.

It is found in the cytoplasm. The enzyme catalyses IMP + diphosphate = hypoxanthine + 5-phospho-alpha-D-ribose 1-diphosphate. The catalysed reaction is GMP + diphosphate = guanine + 5-phospho-alpha-D-ribose 1-diphosphate. The protein operates within purine metabolism; IMP biosynthesis via salvage pathway; IMP from hypoxanthine: step 1/1. In terms of biological role, catalyzes a salvage reaction resulting in the formation of IMP that is energically less costly than de novo synthesis. This Methanosarcina barkeri (strain Fusaro / DSM 804) protein is Hypoxanthine/guanine phosphoribosyltransferase.